The chain runs to 162 residues: Caveolin-2 (162 aa).

The Cytoplasmic portion of the chain corresponds to 1–86 (MGLETEKADV…FEMSKYVIYK (86 aa)). The residue at position 19 (Tyr19) is a Phosphotyrosine; by SRC. A phosphoserine mark is found at Ser20 and Ser23. Tyr27 bears the Phosphotyrosine; by SRC mark. The segment at residues 87–107 (FLTVFLAIPLAFAAGILFATL) is an intramembrane region (helical). Topologically, residues 108-162 (SCLHIWIIMPFVKTCLMVLPSVQTIWKSVTDVVIAPLCTSVGRSFSSVSLQLSHD) are cytoplasmic.

The protein belongs to the caveolin family. In terms of assembly, monomer or homodimer. Interacts with CAV1; the interaction forms a stable heterooligomeric complex that is required for targeting to lipid rafts and for caveolae formation. Tyrosine phosphorylated forms do not form heterooligomers with the Tyr-19-phosphorylated form existing as a monomer or dimer, and the Tyr-27-form as a monomer only. Interacts (tyrosine phosphorylated form) with the SH2 domain-containing proteins, RASA1, NCK1 and SRC. Interacts (tyrosine phosphorylated form) with INSR, the interaction (Tyr-27-phosphorylated form) is increased on insulin stimulation. Interacts (Tyr-19 phosphorylated form) with MAPK1 (phosphorylated form); the interaction, promoted by insulin, leads to nuclear location and MAPK1 activation. Interacts with STAT3; the interaction is increased on insulin-induced tyrosine phosphorylation leading to STAT activation. In terms of processing, phosphorylated on serine and tyrosine residues. CAV1 promotes phosphorylation on Ser-23 which then targets the complex to the plasma membrane, lipid rafts and caveolae. Phosphorylation on both Tyr-19 and Tyr-27 is required for insulin-induced 'Ser-727' phosphorylation of STAT3 and its activation. Phosphorylation on Tyr-19 is required for insulin-induced phosphorylation of MAPK1 and DNA binding of STAT3. Tyrosine phosphorylation is induced by both EGF and insulin.

It localises to the nucleus. The protein resides in the cytoplasm. Its subcellular location is the golgi apparatus membrane. The protein localises to the cell membrane. It is found in the membrane. It localises to the caveola. Functionally, may act as a scaffolding protein within caveolar membranes. Interacts directly with G-protein alpha subunits and can functionally regulate their activity. Acts as an accessory protein in conjunction with CAV1 in targeting to lipid rafts and driving caveolae formation. Positive regulator of cellular mitogenesis of the MAPK signaling pathway. Required for the insulin-stimulated nuclear translocation and activation of MAPK1 and STAT3, and the subsequent regulation of cell cycle progression. This chain is Caveolin-2 (CAV2), found in Muntiacus muntjak (Barking deer).